Here is a 306-residue protein sequence, read N- to C-terminus: MSVFAPIARELDIFFGFSWRDWSTTIIPGSIFAVGAMRDLPPATLVKNYLFLVTWLTPYIYFFNLSNQITGVDEDKINKPDRPIPSGKVTLQGAQRRWIAAFSTFLGIALYQPEFLPETLCWIATVAFLCLTSYGDHWFGKNCVAMTTGTWALLSASWKAIAPATPTSDAWVYAVSVWAGLITHIQDLRDMEGDKAVGRKTLPLVFGDMGSRLIITFFALPAACWVLSLAGIFQLAPVTLGALHAILGYRVLRQGGPRYDHKTYMFYTYIFCLILAFCALDGLGLKINAESLRALLATTGVSLKEL.

The next 2 helical transmembrane spans lie at 13–33 and 43–63; these read IFFG…SIFA and ATLV…IYFF. N64 carries an N-linked (GlcNAc...) asparagine glycan. Helical transmembrane passes span 115 to 135, 161 to 181, 213 to 233, and 265 to 285; these read FLPE…TSYG, IAPA…WAGL, LIIT…AGIF, and MFYT…GLGL.

It belongs to the UbiA prenyltransferase family. Requires Mg(2+) as cofactor.

The protein localises to the membrane. It carries out the reaction (2E,6E,10E)-geranylgeranyl diphosphate = (-)-cyatha-3,12-diene + diphosphate. The protein operates within secondary metabolite biosynthesis. With respect to regulation, EDTA completely blocks the reaction. Diterpene cyclase; part of the gene cluster that mediates the biosynthesis of erinacines, cyathane-xylosides that show unique biological activities, including leishmanicidal activity, stimulating activity for nerve growth-factor synthesis, and agonistic activity toward the kappa opioid receptor. Within the pathway, eriG acts as a diterpene cyclase that converts geranylgeranyl diphosphate (GGPP) into cyatha-3,12-diene. EriG is unable to use geranyl diphosphate (GPP) or farnesyl diphosphate (FPP) as substrates. The first step of the erinacines biosynthesis pathway is catalyzed by the geranylgeranyl diphosphate (GGPP) synthase eriE via conversion of farnesyl pyrophosphate and isopentyl pyrophosphate into geranylgeranyl pyrophosphate (GGPP). GGPP is then substrate of the diterpene cyclase eriG for the production of cyatha-3,12-diene. The cytochrome P450 monooxygenase eriI then hydroxylates cyatha-3,12-diene at C-14 of the seven-membered ring to produce erinacol, which is further hydroxylated at C-15 by the cytochrome P450 monooxygenase eriC to yield cyathadiol. The cytochrome P450 monooxygenase eriA then catalyzes C-11 hydroxylation in the presence of the short chain dehydrogenase/reductase (SDR) eriH, which leads to the production of cyathatriol. The acetyltransferase eriL converts cyathatriol into 11-O-acetyl-cyathatriol. The SDR eriH catalyzes further oxidation of 11-O-acetyl-cyathatriol into 1-O-acetylcyathin A3. Finally, the glycosyl transferase eriJ tranfers xylose from UDP-xylose onto C-14 of 11-O-acetyl-cyathatriol to form eracine Q. EriJ is also able to convert 11-O-acetyl-cyathatriol to eracine Q2 by using UDP-D-glucose as cosubstrate, but at a lower rate. The sequence is that of Diterpene cyclase eriG from Hericium erinaceus (Lion's mane mushroom).